The primary structure comprises 29 residues: Kalata-B11 (29 aa).

Residues 1 to 29 (GLPVCGETCFGGTCNTPGCSCTDPICTRD) constitute a cross-link (cyclopeptide (Gly-Asp)). Cystine bridges form between cysteine 5/cysteine 19, cysteine 9/cysteine 21, and cysteine 14/cysteine 26.

In terms of processing, this is a cyclic peptide.

Functionally, probably participates in a plant defense mechanism. The sequence is that of Kalata-B11 from Oldenlandia affinis.